A 242-amino-acid polypeptide reads, in one-letter code: Pyridoxine 5'-phosphate synthase (242 aa).

Residue N8 coordinates 3-amino-2-oxopropyl phosphate. 10–11 (DH) contributes to the 1-deoxy-D-xylulose 5-phosphate binding site. R19 provides a ligand contact to 3-amino-2-oxopropyl phosphate. The Proton acceptor role is filled by H44. R46 and H51 together coordinate 1-deoxy-D-xylulose 5-phosphate. E71 (proton acceptor) is an active-site residue. Residue T101 coordinates 1-deoxy-D-xylulose 5-phosphate. The active-site Proton donor is the H193. Residues G194 and 215–216 (GF) contribute to the 3-amino-2-oxopropyl phosphate site.

The protein belongs to the PNP synthase family. Homooctamer; tetramer of dimers.

It localises to the cytoplasm. It catalyses the reaction 3-amino-2-oxopropyl phosphate + 1-deoxy-D-xylulose 5-phosphate = pyridoxine 5'-phosphate + phosphate + 2 H2O + H(+). The protein operates within cofactor biosynthesis; pyridoxine 5'-phosphate biosynthesis; pyridoxine 5'-phosphate from D-erythrose 4-phosphate: step 5/5. Catalyzes the complicated ring closure reaction between the two acyclic compounds 1-deoxy-D-xylulose-5-phosphate (DXP) and 3-amino-2-oxopropyl phosphate (1-amino-acetone-3-phosphate or AAP) to form pyridoxine 5'-phosphate (PNP) and inorganic phosphate. In Elusimicrobium minutum (strain Pei191), this protein is Pyridoxine 5'-phosphate synthase.